The following is a 199-amino-acid chain: Fe/S biogenesis protein NfuA (199 aa).

Residues cysteine 151 and cysteine 154 each coordinate [4Fe-4S] cluster.

The protein belongs to the NfuA family. Homodimer. It depends on [4Fe-4S] cluster as a cofactor.

In terms of biological role, involved in iron-sulfur cluster biogenesis. Binds a 4Fe-4S cluster, can transfer this cluster to apoproteins, and thereby intervenes in the maturation of Fe/S proteins. Could also act as a scaffold/chaperone for damaged Fe/S proteins. This chain is Fe/S biogenesis protein NfuA, found in Xanthomonas axonopodis pv. citri (strain 306).